Reading from the N-terminus, the 585-residue chain is Lipoprotein LpqB (585 aa).

A signal peptide spans 1 to 17 (MGRKLLGLLMLAVLLAG). The N-palmitoyl cysteine moiety is linked to residue Cys-18. Residue Cys-18 is the site of S-diacylglycerol cysteine attachment. 2 disordered regions span residues 24–46 (SSAP…KPTP) and 560–585 (PSAD…VLPG).

The protein belongs to the LpqB lipoprotein family.

It is found in the cell membrane. The sequence is that of Lipoprotein LpqB from Mycobacterium paratuberculosis.